The following is a 193-amino-acid chain: Putative RING finger protein ORF38 (193 aa).

The RING-type zinc-finger motif lies at 12-50 (CCICLDDEDVDRDNTIPCRHTVCRTCYVKPMLDQCPVCR).

The chain is Putative RING finger protein ORF38 from Magallana gigas (Pacific oyster).